The chain runs to 179 residues: Probable protein archease (179 aa).

Positions 55, 178, and 179 each coordinate Ca(2+).

Belongs to the archease family.

Functionally, activates the tRNA-splicing ligase complex by facilitating the enzymatic turnover of catalytic subunit RtcB. Acts by promoting the guanylylation of RtcB, a key intermediate step in tRNA ligation. Can also alter the NTP specificity of RtcB such that ATP, dGTP or ITP is used efficiently. This is Probable protein archease from Mycobacterium tuberculosis (strain CDC 1551 / Oshkosh).